The primary structure comprises 417 residues: Serine protease hepsin (417 aa).

Over 1–23 (MAQKEGGRTVPCCSRPKVAALTA) the chain is Cytoplasmic. The helical; Signal-anchor for type II membrane protein transmembrane segment at 24-44 (GTLLLLTAIGAASWAIVAVLL) threads the bilayer. Residues 45–417 (RSDQEPLYPV…SEASGMVTQL (373 aa)) are Extracellular-facing. In terms of domain architecture, SRCR spans 54–151 (VQVSSADARL…RGRFLAAICQ (98 aa)). 8 disulfide bridges follow: cysteine 77-cysteine 140, cysteine 90-cysteine 150, cysteine 119-cysteine 138, cysteine 153-cysteine 277, cysteine 188-cysteine 204, cysteine 291-cysteine 359, cysteine 322-cysteine 338, and cysteine 349-cysteine 381. Residue asparagine 112 is glycosylated (N-linked (GlcNAc...) asparagine). In terms of domain architecture, Peptidase S1 spans 163 to 405 (IVGGRDTSLG…FREWIFQAIK (243 aa)). Catalysis depends on charge relay system residues histidine 203 and aspartate 257. Serine 353 serves as the catalytic Charge relay system.

The protein belongs to the peptidase S1 family. In terms of tissue distribution, detected in liver and kidney.

It localises to the cell membrane. The protein resides in the apical cell membrane. It catalyses the reaction Cleavage after basic amino-acid residues, with Arg strongly preferred to Lys.. Serine protease that cleaves extracellular substrates, and contributes to the proteolytic processing of growth factors, such as HGF and MST1/HGFL. Plays a role in cell growth and maintenance of cell morphology. Plays a role in the proteolytic processing of ACE2. Mediates the proteolytic cleavage of urinary UMOD that is required for UMOD polymerization. The sequence is that of Serine protease hepsin (HPN) from Homo sapiens (Human).